We begin with the raw amino-acid sequence, 438 residues long: Aspartate--tRNA(Asp/Asn) ligase (438 aa).

Glutamate 176 contacts L-aspartate. The interval 198–201 (QLYK) is aspartate. An L-aspartate-binding site is contributed by arginine 220. ATP contacts are provided by residues 220–222 (RAE), 228–230 (RHL), and glutamate 361. 2 residues coordinate Mg(2+): glutamate 361 and serine 364. L-aspartate is bound by residues serine 364 and arginine 368. Position 409–412 (409–412 (GADR)) interacts with ATP.

It belongs to the class-II aminoacyl-tRNA synthetase family. Type 2 subfamily. Homodimer. It depends on Mg(2+) as a cofactor.

The protein localises to the cytoplasm. The catalysed reaction is tRNA(Asx) + L-aspartate + ATP = L-aspartyl-tRNA(Asx) + AMP + diphosphate. Aspartyl-tRNA synthetase with relaxed tRNA specificity since it is able to aspartylate not only its cognate tRNA(Asp) but also tRNA(Asn). Reaction proceeds in two steps: L-aspartate is first activated by ATP to form Asp-AMP and then transferred to the acceptor end of tRNA(Asp/Asn). The protein is Aspartate--tRNA(Asp/Asn) ligase of Methanococcus maripaludis (strain C6 / ATCC BAA-1332).